The following is a 394-amino-acid chain: Growth-regulating factor 4 (394 aa).

The region spanning 64 to 99 is the QLQ domain; that stretch reads PFTAAQYEELEQQALIYKYLVAGVPVPPDLVLPIRR. Residues 125–169 enclose the WRC domain; that stretch reads DPEPGRCRRTDGKKWRCSKEAAPDSKYCERHMHRGRNRSRKPVET. Short sequence motifs (bipartite nuclear localization signal) lie at residues 130–140 and 158–165; these read RCRRTDGKKWR and RGRNRSRK. The disordered stretch occupies residues 156–180; the sequence is MHRGRNRSRKPVETQLVAQSQPPSS. Residues 170–180 show a composition bias toward low complexity; it reads QLVAQSQPPSS.

Belongs to the GRF family. Interacts with GIF1. Interacts with GSK2. Expressed in stems. Expressed in panicles.

The protein resides in the nucleus. With respect to regulation, transactivation activity is repressed by GSK2. Its function is as follows. Transcription activator that plays a role in the regulation of meristematic function in leaves, stems and inflorescences. Transcription activator that plays a regulatory role in grain development. Positively regulates grain size by promoting cell division and expansion, leading to increased grain length and width. Positively regulates the expression of genes promoting cell proliferation. Activates the expression of expansin genes to promote cell expansion and grain size. May promote grain size by activating brassinosteroid responses. Component of a network formed by the microRNA396 (miRNA396), the GRFs and their interacting factors (GIFs) acting in the regulation of meristem function, at least partially through the control of cell proliferation. Component of the miRNA396c-GRF4-GIF1 regulatory module that plays an important role in grain size determination. The protein is Growth-regulating factor 4 of Oryza sativa subsp. japonica (Rice).